We begin with the raw amino-acid sequence, 611 residues long: Inhibitor of apoptosis protein (611 aa).

BIR repeat units lie at residues 30 to 97 (ELYR…CSFV), 176 to 242 (EEAR…CPFV), and 262 to 329 (HEAR…CEYL). Zn(2+) is bound by residues cysteine 299, cysteine 302, histidine 319, and cysteine 326. A CARD domain is found at 446–536 (VASDDLSLIR…VLYKDLFVEK (91 aa)). An RING-type zinc finger spans residues 564–599 (CKVCMDKEVSIVFIPCGHLVVCKECAPSLRKCPICR).

The protein belongs to the IAP family. In terms of tissue distribution, cells of the T-lymphocyte lineage. Found in both cortical and medullary cells of the thymus. Expressed at relatively high levels also in spleen, bursa, intestine and lung and at very low levels in testis, brain and skeletal muscle.

Its subcellular location is the nucleus. It is found in the cytoplasm. Apoptotic suppressor. This is Inhibitor of apoptosis protein (ITA) from Gallus gallus (Chicken).